The following is a 506-amino-acid chain: Protein MGF 505-9R (506 aa).

3 ANK repeats span residues 54–83 (PTHK…SLQY), 253–283 (QVDT…ETVE), and 313–343 (FVKK…KINL).

It belongs to the asfivirus MGF 505 family.

Functionally, plays a role in virus cell tropism, and may be required for efficient virus replication in macrophages. The sequence is that of Protein MGF 505-9R from Ornithodoros (relapsing fever ticks).